Here is a 127-residue protein sequence, read N- to C-terminus: Holo-[acyl-carrier-protein] synthase (127 aa).

Positions 8 and 59 each coordinate Mg(2+).

The protein belongs to the P-Pant transferase superfamily. AcpS family. Mg(2+) is required as a cofactor.

Its subcellular location is the cytoplasm. It carries out the reaction apo-[ACP] + CoA = holo-[ACP] + adenosine 3',5'-bisphosphate + H(+). Transfers the 4'-phosphopantetheine moiety from coenzyme A to a Ser of acyl-carrier-protein. This Rickettsia bellii (strain OSU 85-389) protein is Holo-[acyl-carrier-protein] synthase.